Here is a 163-residue protein sequence, read N- to C-terminus: uncharacterized protein (163 aa).

This is an uncharacterized protein from Rickettsia prowazekii (strain Madrid E).